Here is a 370-residue protein sequence, read N- to C-terminus: DNA repair protein RAD51 homolog 2 (370 aa).

109–116 (GPPGIGKS) provides a ligand contact to ATP.

It belongs to the RecA family. RAD51 subfamily. Preferentially expressed in flower buds and roots.

Its subcellular location is the nucleus. Functionally, may be involved in the homologous recombination repair (HRR) pathway of double-stranded DNA breaks arising during DNA replication or induced by DNA-damaging agents. In Arabidopsis thaliana (Mouse-ear cress), this protein is DNA repair protein RAD51 homolog 2 (RAD51B).